An 863-amino-acid polypeptide reads, in one-letter code: Probable beta-glucosidase A (863 aa).

A signal peptide spans 1-19 (MKLGWLEAAALTAASVASA). N65, N214, and N255 each carry an N-linked (GlcNAc...) asparagine glycan. D283 is a catalytic residue. Residues N318, N325, N357, N493, N526, N545, N567, N664, and N715 are each glycosylated (N-linked (GlcNAc...) asparagine). Residues 720–754 (KESSGDPNYGWDDEDYIPEGAKDGSPQDVLPSGGG) are disordered.

It belongs to the glycosyl hydrolase 3 family.

The protein resides in the secreted. The enzyme catalyses Hydrolysis of terminal, non-reducing beta-D-glucosyl residues with release of beta-D-glucose.. Its pathway is glycan metabolism; cellulose degradation. Functionally, beta-glucosidases are one of a number of cellulolytic enzymes involved in the degradation of cellulosic biomass. Catalyzes the last step releasing glucose from the inhibitory cellobiose. This chain is Probable beta-glucosidase A (bglA), found in Emericella nidulans (strain FGSC A4 / ATCC 38163 / CBS 112.46 / NRRL 194 / M139) (Aspergillus nidulans).